Here is a 205-residue protein sequence, read N- to C-terminus: V-type ATP synthase subunit E (205 aa).

Belongs to the V-ATPase E subunit family.

In terms of biological role, produces ATP from ADP in the presence of a proton gradient across the membrane. This Treponema denticola (strain ATCC 35405 / DSM 14222 / CIP 103919 / JCM 8153 / KCTC 15104) protein is V-type ATP synthase subunit E.